The primary structure comprises 187 residues: Putative protein SSX8 (187 aa).

2 disordered regions span residues 1–21 (MNGD…SEKR) and 109–187 (PKIM…EDDE). Positions 20–83 (KRSKAFNDIA…KQATDFQGNY (64 aa)) constitute a KRAB-related domain. S123 is modified (phosphoserine). Positions 152 to 168 (KRSGPKRGRHAWTHRLR) are enriched in basic residues.

This sequence belongs to the SSX family. Not detected in any normal or tumor tissues.

In terms of biological role, could act as a modulator of transcription. The protein is Putative protein SSX8 of Homo sapiens (Human).